A 185-amino-acid chain; its full sequence is Phosphatidylglycerophosphatase GEP4, mitochondrial (185 aa).

A Phosphoryl acceptor motif is present at residues 45-49 (DKDNC).

Belongs to the GEP4 family.

It is found in the mitochondrion inner membrane. It catalyses the reaction a 1,2-diacyl-sn-glycero-3-phospho-(1'-sn-glycero-3'-phosphate) + H2O = a 1,2-diacyl-sn-glycero-3-phospho-(1'-sn-glycerol) + phosphate. It participates in phospholipid metabolism; phosphatidylglycerol biosynthesis; phosphatidylglycerol from CDP-diacylglycerol: step 2/2. Phosphatidylglycerophosphatase involved in the biosynthesis of cardiolipin (CL), a unique dimeric phosphoglycerolipid predominantly present in mitochondrial membranes and which has important functions for cellular energy metabolism, mitochondrial dynamics and the initiation of apoptotic pathways. Required for the stability of respiratory chain supercomplexes and for growth at elevated temperature, in presence of ethidium bromide or in absence of prohibitins. The protein is Phosphatidylglycerophosphatase GEP4, mitochondrial (GEP4) of Saccharomyces cerevisiae (strain ATCC 204508 / S288c) (Baker's yeast).